We begin with the raw amino-acid sequence, 207 residues long: Claudin-11 (207 aa).

A topological domain (cytoplasmic) is located at residue Met1. The chain crosses the membrane as a helical span at residues 2 to 22 (VATCLQVVGFVTSFVGWIGII). The Extracellular segment spans residues 23–82 (VTTSTNDWVVTCGYTIPTCRKLDELGSKGLWADCVMATGLYHCKPLVDILILPGYVQACR). The chain crosses the membrane as a helical span at residues 83–103 (ALMIAASVLGLPAILLLLTVL). Topologically, residues 104 to 122 (PCIRMGHEPGVAKYRRAQL) are cytoplasmic. A helical membrane pass occupies residues 123 to 143 (AGVMLVLVALCAMVATIWFPV). The Extracellular segment spans residues 144–157 (CAHRETTIVSFGYS). Residues 158-178 (LYAGWIGAVLCLVGGCVIVCC) form a helical membrane-spanning segment. Over 179–207 (AGDAQAFGENRFYYSSGSSSPTHAKSAHV) the chain is Cytoplasmic. Residues Ser193, Ser194, Ser197, and Ser198 each carry the phosphoserine modification.

This sequence belongs to the claudin family. Interacts with tetraspanin-3/TSPAN3. Interacts with OCLN.

It is found in the cell junction. It localises to the tight junction. The protein resides in the cell membrane. In terms of biological role, plays a major role in tight junction-specific obliteration of the intercellular space, through calcium-independent cell-adhesion activity. The chain is Claudin-11 (CLDN11) from Bos taurus (Bovine).